The following is a 416-amino-acid chain: Glutamyl-tRNA reductase (416 aa).

Residues 51-54, Ser110, 115-117, and Gln121 contribute to the substrate site; these read TCNR and EPQ. The active-site Nucleophile is Cys52. 190 to 195 contacts NADP(+); sequence GAGQTG.

Belongs to the glutamyl-tRNA reductase family. Homodimer.

It catalyses the reaction (S)-4-amino-5-oxopentanoate + tRNA(Glu) + NADP(+) = L-glutamyl-tRNA(Glu) + NADPH + H(+). It participates in porphyrin-containing compound metabolism; protoporphyrin-IX biosynthesis; 5-aminolevulinate from L-glutamyl-tRNA(Glu): step 1/2. Catalyzes the NADPH-dependent reduction of glutamyl-tRNA(Glu) to glutamate 1-semialdehyde (GSA). The protein is Glutamyl-tRNA reductase of Francisella tularensis subsp. tularensis (strain FSC 198).